The chain runs to 762 residues: 5-methyltetrahydropteroyltriglutamate--homocysteine methyltransferase (762 aa).

Residues 17–20 (REWK) and Lys111 each bind 5-methyltetrahydropteroyltri-L-glutamate. Residues 435–437 (IGS) and Glu488 each bind L-homocysteine. Residues 435 to 437 (IGS) and Glu488 each bind L-methionine. Residues 519-520 (RC) and Trp565 each bind 5-methyltetrahydropteroyltri-L-glutamate. Residue Asp603 participates in L-homocysteine binding. Asp603 contributes to the L-methionine binding site. Glu609 serves as a coordination point for 5-methyltetrahydropteroyltri-L-glutamate. The Zn(2+) site is built by His645, Cys647, and Glu669. His698 serves as the catalytic Proton donor. Residue Cys730 coordinates Zn(2+).

The protein belongs to the vitamin-B12 independent methionine synthase family. Zn(2+) is required as a cofactor.

It carries out the reaction 5-methyltetrahydropteroyltri-L-glutamate + L-homocysteine = tetrahydropteroyltri-L-glutamate + L-methionine. Its pathway is amino-acid biosynthesis; L-methionine biosynthesis via de novo pathway; L-methionine from L-homocysteine (MetE route): step 1/1. Catalyzes the transfer of a methyl group from 5-methyltetrahydrofolate to homocysteine resulting in methionine formation. The sequence is that of 5-methyltetrahydropteroyltriglutamate--homocysteine methyltransferase from Bacillus cytotoxicus (strain DSM 22905 / CIP 110041 / 391-98 / NVH 391-98).